The chain runs to 742 residues: Potassium transporter 19 (742 aa).

At 1-46 (MSVQEDGAARPEPDVLRRHDSLYGDAEKVSNNKRHGAGGSWARTLQ) the chain is on the cytoplasmic side. A helical transmembrane segment spans residues 47–67 (LAFQSIGVVYGDVGTSPLYVY). Residues 68–83 (SSTFPNGIKHPDDLVG) are Extracellular-facing. A helical membrane pass occupies residues 84-104 (VLSLILYTLILIPMVKYVFIV). At 105-170 (LYANDNGDGG…QKLESSNAAK (66 aa)) the chain is on the cytoplasmic side. A helical transmembrane segment spans residues 171–191 (IALFTITILGTSMVMGDGTLT). Residues 192-206 (PAISVLSAVSGIREK) lie on the Extracellular side of the membrane. Residues 207 to 227 (APNLTQSQVVWISVAILFVLF) form a helical membrane-spanning segment. At 228 to 236 (SMQRFGTDK) the chain is on the cytoplasmic side. The chain crosses the membrane as a helical span at residues 237–257 (VGYTFAPVISVWFLLIAGIGM). Residues 258-287 (YNLTVHEITILRAFNPKYIVDYFRRNGKEA) are Extracellular-facing. Residue N259 is glycosylated (N-linked (GlcNAc...) asparagine). A helical transmembrane segment spans residues 288 to 308 (WVSLGGVVLCITGTEAMFADL). Residues 309–317 (GHFNIRAIQ) lie on the Cytoplasmic side of the membrane. Residues 318–338 (LSFTCVLFPSVALCYMGQAAY) traverse the membrane as a helical segment. Residues 339 to 352 (LRKFPENVGDTFYR) are Extracellular-facing. A helical transmembrane segment spans residues 353–373 (SIPAPLFWPVFVVAIMGAIIA). At 374–409 (SQAMLSGAFAILSKALSLGCFPRVEVVHTSNKYEGQ) the chain is on the cytoplasmic side. Residues 410 to 430 (VYIPEVNFLIGAASVAVTLAF) traverse the membrane as a helical segment. At 431–441 (QTTANIGNAYG) the chain is on the extracellular side. The chain crosses the membrane as a helical span at residues 442–462 (ICVVTVFSITTHLMTVVMLLI). At 463-468 (WKVRLP) the chain is on the cytoplasmic side. The helical transmembrane segment at 469 to 489 (FIAAFYAAFGLAEFLYLSSIL) threads the bilayer. Over 490–495 (SKFAEG) the chain is Extracellular. The helical transmembrane segment at 496–516 (GYLPFCFSLVLMALMATWHYV) threads the bilayer. Over 517 to 742 (HVKRYWYELD…LLKVGITYEI (226 aa)) the chain is Cytoplasmic.

Belongs to the HAK/KUP transporter (TC 2.A.72.3) family.

Its subcellular location is the membrane. High-affinity potassium transporter. The protein is Potassium transporter 19 (HAK19) of Oryza sativa subsp. japonica (Rice).